The following is a 239-amino-acid chain: Small ribosomal subunit protein uS2 (239 aa).

It belongs to the universal ribosomal protein uS2 family.

The chain is Small ribosomal subunit protein uS2 from Francisella tularensis subsp. novicida (strain U112).